The primary structure comprises 429 residues: Bifunctional phosphoribosylaminoimidazole carboxylase/phosphoribosylaminoimidazole succinocarboxamide synthetase (429 aa).

The segment at 7-264 (ASIEGYKLGK…WVAEQLADIV (258 aa)) is SAICAR synthetase. Residues 7–264 (ASIEGYKLGK…WVAEQLADIV (258 aa)) form an SAICAR synthetase domain region. The AIR carboxylase stretch occupies residues 265 to 429 (PKKDHLVVIL…DKELRGVRNA (165 aa)). Residues 270–429 (LVVILMGSAS…DKELRGVRNA (160 aa)) are AIR carboxylase domain. S335 is a binding site for CO2.

This sequence in the N-terminal section; belongs to the SAICAR synthetase family. The protein in the C-terminal section; belongs to the AIR carboxylase family. Class II subfamily. Homooctamer.

It catalyses the reaction 5-amino-1-(5-phospho-D-ribosyl)imidazole-4-carboxylate + L-aspartate + ATP = (2S)-2-[5-amino-1-(5-phospho-beta-D-ribosyl)imidazole-4-carboxamido]succinate + ADP + phosphate + 2 H(+). It carries out the reaction 5-amino-1-(5-phospho-D-ribosyl)imidazole-4-carboxylate + H(+) = 5-amino-1-(5-phospho-beta-D-ribosyl)imidazole + CO2. It functions in the pathway purine metabolism; IMP biosynthesis via de novo pathway; 5-amino-1-(5-phospho-D-ribosyl)imidazole-4-carboxamide from 5-amino-1-(5-phospho-D-ribosyl)imidazole-4-carboxylate: step 1/2. Its pathway is purine metabolism; IMP biosynthesis via de novo pathway; 5-amino-1-(5-phospho-D-ribosyl)imidazole-4-carboxylate from 5-amino-1-(5-phospho-D-ribosyl)imidazole (carboxylase route): step 1/1. Functionally, bifunctional phosphoribosylaminoimidazole carboxylase and phosphoribosylaminoimidazole succinocarboxamide synthetase catalyzing two reactions of the de novo purine biosynthetic pathway. The sequence is that of Bifunctional phosphoribosylaminoimidazole carboxylase/phosphoribosylaminoimidazole succinocarboxamide synthetase from Drosophila melanogaster (Fruit fly).